Here is a 290-residue protein sequence, read N- to C-terminus: 4-diphosphocytidyl-2-C-methyl-D-erythritol kinase (290 aa).

The active site involves lysine 10. 95-105 (PVAAGLAGGSS) contacts ATP. Aspartate 137 is an active-site residue.

This sequence belongs to the GHMP kinase family. IspE subfamily.

It carries out the reaction 4-CDP-2-C-methyl-D-erythritol + ATP = 4-CDP-2-C-methyl-D-erythritol 2-phosphate + ADP + H(+). It participates in isoprenoid biosynthesis; isopentenyl diphosphate biosynthesis via DXP pathway; isopentenyl diphosphate from 1-deoxy-D-xylulose 5-phosphate: step 3/6. Its function is as follows. Catalyzes the phosphorylation of the position 2 hydroxy group of 4-diphosphocytidyl-2C-methyl-D-erythritol. This is 4-diphosphocytidyl-2-C-methyl-D-erythritol kinase from Geobacillus kaustophilus (strain HTA426).